A 475-amino-acid polypeptide reads, in one-letter code: Pyruvate kinase (475 aa).

Position 36 (arginine 36) interacts with substrate. 3 residues coordinate K(+): asparagine 38, serine 40, and aspartate 70. Residue 38-41 (NFSH) participates in ATP binding. ATP is bound by residues arginine 77 and lysine 158. Residue glutamate 223 participates in Mg(2+) binding. Substrate-binding residues include glycine 246, aspartate 247, and threonine 279. Aspartate 247 serves as a coordination point for Mg(2+).

The protein belongs to the pyruvate kinase family. Homotetramer. A divalent metal cation serves as cofactor.

The enzyme catalyses pyruvate + ATP = phosphoenolpyruvate + ADP + H(+). Its pathway is carbohydrate degradation; glycolysis; pyruvate from D-glyceraldehyde 3-phosphate: step 5/5. In Thermococcus litoralis (strain ATCC 51850 / DSM 5473 / JCM 8560 / NS-C), this protein is Pyruvate kinase (pki).